The following is a 755-amino-acid chain: Periplasmic nitrate reductase (755 aa).

The tat-type signal signal peptide spans 1–32 (MSTSRRDFLKYFAMSAAVAAASGAGFGSLALA). One can recognise a 4Fe-4S Mo/W bis-MGD-type domain in the interval 38–93 (EKWVKGVCRYCGTGCGVLVGVKDGKAVAIQGDPNNHNAGLLCLKGSLLIPVLNSKE). [4Fe-4S] cluster-binding residues include Cys-45, Cys-48, Cys-52, and Cys-79. Residues Lys-81, Gln-143, Asn-168, Cys-172, 208-212 (NTSEA), 236-238 (DPR), 255-257 (GTD), Met-340, Gln-344, Asn-450, 475-477 (IEA), and 647-656 (SMRVIDHWHT) each bind Mo-bis(molybdopterin guanine dinucleotide). Residues 648 to 653 (MRVIDH) and Phe-721 contribute to the substrate site. Asn-729 and Lys-746 together coordinate Mo-bis(molybdopterin guanine dinucleotide).

The protein belongs to the prokaryotic molybdopterin-containing oxidoreductase family. NasA/NapA/NarB subfamily. Monomer. Component of the periplasmic nitrate reductase NapAB complex composed of NapA and NapB. Requires [4Fe-4S] cluster as cofactor. Mo-bis(molybdopterin guanine dinucleotide) serves as cofactor. Post-translationally, predicted to be exported by the Tat system. The position of the signal peptide cleavage has been experimentally proven.

It localises to the periplasm. The catalysed reaction is 2 Fe(II)-[cytochrome] + nitrate + 2 H(+) = 2 Fe(III)-[cytochrome] + nitrite + H2O. Its activity is regulated as follows. Activated by potassium and sodium ions and inhibited by magnesium and calcium ions. In terms of biological role, catalytic subunit of the periplasmic nitrate reductase complex NapAB. Receives electrons from NapB and catalyzes the reduction of nitrate to nitrite. The chain is Periplasmic nitrate reductase from Desulfovibrio desulfuricans (strain ATCC 27774 / DSM 6949 / MB).